We begin with the raw amino-acid sequence, 152 residues long: Transcriptional regulator MraZ (152 aa).

2 consecutive SpoVT-AbrB domains span residues 5–52 (ASAI…PFDE) and 81–124 (AHEC…DETA).

The protein belongs to the MraZ family. As to quaternary structure, forms oligomers.

It is found in the cytoplasm. The protein resides in the nucleoid. In Shewanella sediminis (strain HAW-EB3), this protein is Transcriptional regulator MraZ.